We begin with the raw amino-acid sequence, 65 residues long: Conotoxin VnMLCL-041 (65 aa).

Positions 1-19 (MLCLPVFIILLLLASPAAP) are cleaved as a signal peptide. Positions 20-43 (NPLQTRIQSNLIRAGPEDANIKTD) are excised as a propeptide. The residue at position 64 (Lys-64) is a Lysine amide.

The protein belongs to the conotoxin T superfamily. Expressed by the venom duct.

It is found in the secreted. This Conus ventricosus (Mediterranean cone) protein is Conotoxin VnMLCL-041.